A 334-amino-acid polypeptide reads, in one-letter code: Replication factor C subunit 4 (334 aa).

An ATP-binding site is contributed by 55–62 (GPPGTGKT).

This sequence belongs to the activator 1 small subunits family. Heteropentamer of various rfc subunits that forms a complex (RFC) with PCNA in the presence of ATP.

It is found in the nucleus. Functionally, the elongation of primed DNA templates by DNA polymerase delta and epsilon requires the action of the accessory proteins PCNA and activator 1. This subunit may be involved in the elongation of the multiprimed DNA template. This Caenorhabditis elegans protein is Replication factor C subunit 4 (rfc-4).